The chain runs to 410 residues: MKNEIIERFTKYVQVDTQSDPNSDTCPSTPGQWTLAKMLVEELKAIGMEEVTIDENGYIMATLPANTDKDVPTIGFLAHMDTAPEFTGANVKPQIVENYDGNDIILNEALHIVLSPKDFPELANYKGHTLITTDGTTLLGADNKAGIAEIMTAMAYLIQHPEIKHGKVRVAFTPDEEIGRGPHKFDVAKFGAKYAYTVDGGPLGELEYESFNAAEAKIKFKGKNVHPGTAKGKMINSMKIAMEFHAQLPANEAPEHTEGYEGFYHLLSFQGNVEETALHYIIRDFDREQFEARKAKMREIAAKLQEKYGKERIAIEIKDQYYNMREKIEPVREVVDIAYEAMKNLNIEPKISPIRGGTDGSQLSYMGLPTPNIFTGGENFHGRYEYISVDNMIKATNVIIEIIKLFEQKA.

Histidine 79 is a binding site for Zn(2+). Aspartate 81 is an active-site residue. Position 142 (aspartate 142) interacts with Zn(2+). Glutamate 176 (proton acceptor) is an active-site residue. The Zn(2+) site is built by glutamate 177, aspartate 199, and histidine 381.

It belongs to the peptidase M20B family. Zn(2+) serves as cofactor.

Its subcellular location is the cytoplasm. It carries out the reaction Release of the N-terminal residue from a tripeptide.. Functionally, cleaves the N-terminal amino acid of tripeptides. This Geobacillus sp. (strain WCH70) protein is Peptidase T.